The chain runs to 45 residues: Small polypeptide DEVIL 2 (45 aa).

The tract at residues 14–45 (SQSRRLGKYLKEQKGRIYIIRRCVMMLLCSHD) is required for DVL/RTFL small polypeptide activity. Residues 17–33 (RRLGKYLKEQKGRIYII) form a helical membrane-spanning segment.

The protein belongs to the DVL/RTFL small polypeptides family. In terms of tissue distribution, mostly expressed in stems and, to a lower extent, in roots and leaves.

The protein resides in the cell membrane. Small polypeptide acting as a regulatory molecule which coordinates cellular responses required for differentiation, growth and development, including leaves shape, pedicule elongation, inflorescence organization and fruit maturation, probably by restricting polar cell proliferation in lateral organs and coordinating socket cell recruitment and differentiation at trichome sites. This Arabidopsis thaliana (Mouse-ear cress) protein is Small polypeptide DEVIL 2.